The primary structure comprises 363 residues: dTDP-L-rhamnose 4-epimerase (363 aa).

Residues 18–24 (GGAGFIG), 68–69 (DV), and 90–94 (LAAET) contribute to the NAD(+) site. Positions 136 and 191 each coordinate substrate. NAD(+)-binding residues include Tyr-191 and Lys-195. Tyr-191 (proton acceptor) is an active-site residue. Positions 220 and 259 each coordinate substrate.

Belongs to the NAD(P)-dependent epimerase/dehydratase family. NAD(+) is required as a cofactor.

The enzyme catalyses dTDP-6-deoxy-beta-L-talose = dTDP-beta-L-rhamnose. It functions in the pathway bacterial outer membrane biogenesis; LPS O-antigen biosynthesis. Its function is as follows. Catalyzes the interconvertion of dTDP-6-deoxy-L-talose and dTDP-L-rhamnose. The equilibrium is strongly toward dTDP-L-rhamnose. This Burkholderia thailandensis (strain ATCC 700388 / DSM 13276 / CCUG 48851 / CIP 106301 / E264) protein is dTDP-L-rhamnose 4-epimerase (wbiB).